Reading from the N-terminus, the 154-residue chain is HTAGRYQAKRFRKAQCPIVERLTNSLMMHGRNNGKKLMAVRIVKHAMEIIHLLTDLNPIQVIVDAVINSGPREDATRIGSAGVVRRQAVDISPLRRVSQAIYLLTTGARESAFRNIKTIAECLADELINAAKGSSNSYAIKKKDEIERVAKANR.

It belongs to the universal ribosomal protein uS7 family.

This chain is Small ribosomal subunit protein uS7 (RPS5), found in Nicotiana plumbaginifolia (Leadwort-leaved tobacco).